Reading from the N-terminus, the 160-residue chain is Non-secretory ribonuclease (160 aa).

The first 27 residues, 1–27 (MVPKLFTSPICLLLLLGLMGVEGSLHA), serve as a signal peptide directing secretion. C-linked (Man) tryptophan glycosylation occurs at Trp34. His42 functions as the Proton acceptor in the catalytic mechanism. A glycan (N-linked (GlcNAc...) asparagine) is linked at Asn44. 4 disulfides stabilise this stretch: Cys50/Cys110, Cys64/Cys122, Cys82/Cys137, and Cys89/Cys98. Tyr60 bears the 3'-nitrotyrosine mark. 65-69 (KNQNT) provides a ligand contact to substrate. N-linked (GlcNAc...) asparagine glycosylation is found at Asn92, Asn111, and Asn138. His155 (proton donor) is an active-site residue.

It belongs to the pancreatic ribonuclease family. In terms of assembly, interacts with and forms a tight 1:1 complex with RNH1. Dimerization of two such complexes may occur.

The protein resides in the lysosome. It localises to the cytoplasmic granule. It carries out the reaction an [RNA] containing cytidine + H2O = an [RNA]-3'-cytidine-3'-phosphate + a 5'-hydroxy-ribonucleotide-3'-[RNA].. It catalyses the reaction an [RNA] containing uridine + H2O = an [RNA]-3'-uridine-3'-phosphate + a 5'-hydroxy-ribonucleotide-3'-[RNA].. In terms of biological role, this is a non-secretory ribonuclease. It is a pyrimidine specific nuclease with a slight preference for U. Cytotoxin and helminthotoxin. Possesses a wide variety of biological activities. The sequence is that of Non-secretory ribonuclease (RNASE2) from Macaca nemestrina (Pig-tailed macaque).